The chain runs to 213 residues: Orotate phosphoribosyltransferase (213 aa).

Residue lysine 26 participates in 5-phospho-alpha-D-ribose 1-diphosphate binding. Residue 34–35 (FF) participates in orotate binding. Residues 72-73 (YK), arginine 99, lysine 100, lysine 103, histidine 105, and 124-132 (DDVITAGTA) each bind 5-phospho-alpha-D-ribose 1-diphosphate. The orotate site is built by threonine 128 and arginine 156.

This sequence belongs to the purine/pyrimidine phosphoribosyltransferase family. PyrE subfamily. In terms of assembly, homodimer. The cofactor is Mg(2+).

The catalysed reaction is orotidine 5'-phosphate + diphosphate = orotate + 5-phospho-alpha-D-ribose 1-diphosphate. Its pathway is pyrimidine metabolism; UMP biosynthesis via de novo pathway; UMP from orotate: step 1/2. In terms of biological role, catalyzes the transfer of a ribosyl phosphate group from 5-phosphoribose 1-diphosphate to orotate, leading to the formation of orotidine monophosphate (OMP). In Serratia proteamaculans (strain 568), this protein is Orotate phosphoribosyltransferase.